Consider the following 122-residue polypeptide: MIQVESRLEVADNSGAKKVQCIKVIGGSKRRYARVGDVIIVAVKAALPRGKVKKGEVARAVVVRTKKEISRPDGSLIRFDKNAAVLINKAGEPVGTRIFGPVTRELRARNYMKIISLAPEVL.

The protein belongs to the universal ribosomal protein uL14 family. In terms of assembly, part of the 50S ribosomal subunit. Forms a cluster with proteins L3 and L19. In the 70S ribosome, L14 and L19 interact and together make contacts with the 16S rRNA in bridges B5 and B8.

In terms of biological role, binds to 23S rRNA. Forms part of two intersubunit bridges in the 70S ribosome. This chain is Large ribosomal subunit protein uL14, found in Magnetococcus marinus (strain ATCC BAA-1437 / JCM 17883 / MC-1).